A 154-amino-acid polypeptide reads, in one-letter code: Ribosomal RNA large subunit methyltransferase H (154 aa).

Residues Leu76, Gly103, and Leu122–Leu127 contribute to the S-adenosyl-L-methionine site.

It belongs to the RNA methyltransferase RlmH family. As to quaternary structure, homodimer.

It is found in the cytoplasm. It carries out the reaction pseudouridine(1915) in 23S rRNA + S-adenosyl-L-methionine = N(3)-methylpseudouridine(1915) in 23S rRNA + S-adenosyl-L-homocysteine + H(+). Its function is as follows. Specifically methylates the pseudouridine at position 1915 (m3Psi1915) in 23S rRNA. This is Ribosomal RNA large subunit methyltransferase H from Wolinella succinogenes (strain ATCC 29543 / DSM 1740 / CCUG 13145 / JCM 31913 / LMG 7466 / NCTC 11488 / FDC 602W) (Vibrio succinogenes).